Consider the following 1270-residue polypeptide: Breakpoint cluster region protein (1270 aa).

Residues 28-55 are a coiled coil; it reads VGDIEQELERCKASIRRLEQEVNQERFR. Disordered stretches follow at residues 67-173, 201-249, 295-396, and 412-484; these read KKSY…SADA, ISSL…DYED, KSPL…RHRQ, and TGQI…LEPT. The segment covering 126–139 has biased composition (low complexity); sequence GRPATARRPAAAAP. A phosphoserine mark is found at serine 216 and serine 237. At tyrosine 247 the chain carries Phosphotyrosine. 2 stretches are compositionally biased toward low complexity: residues 348–358 and 371–384; these read SSGQSSRVSPS and SPSQ…DSSS. A phosphoserine mark is found at serine 358, serine 379, and serine 384. Phosphothreonine is present on threonine 387. Residues serine 461 and serine 465 each carry the phosphoserine modification. The residue at position 473 (arginine 473) is an Omega-N-methylarginine. Phosphoserine occurs at positions 475 and 487. Residues 497 to 690 enclose the DH domain; the sequence is MRKWVLSGIL…QNFLSSINEE (194 aa). Tyrosine 553 is subject to Phosphotyrosine. A Phosphothreonine modification is found at threonine 640. Tyrosine 643 bears the Phosphotyrosine mark. Phosphothreonine is present on threonine 692. Residues 707–865 enclose the PH domain; sequence QLLKDSFMVE…WRESIREQQK (159 aa). Residues 892 to 1019 enclose the C2 domain; sequence HHIPLTINKE…QDRDWQRTVI (128 aa). Positions 1053–1247 constitute a Rho-GAP domain; the sequence is VKIAVVTKRE…VMSQVQVLLY (195 aa). Phosphoserine is present on serine 1263.

In terms of assembly, homotetramer. Interacts with PDZK1. May interact with CCPG1. Interacts with HCK, FES/FPS, ABL1, PIK3R1 and GRB2. Interacts with SH2D5. Interacts with DLG4. In terms of processing, autophosphorylated. Phosphorylated by FES/FPS on tyrosine residues, leading to down-regulation of the BCR kinase activity. Phosphorylation by HCK is important for interaction with GRB2. As to expression, expressed in brain, including the cortex, hippocampus, cerebellum, and brainstem, as well as the spinal cord (at protein level).

The protein resides in the postsynaptic density. It is found in the cell projection. It localises to the dendritic spine. The protein localises to the axon. Its subcellular location is the synapse. It catalyses the reaction L-seryl-[protein] + ATP = O-phospho-L-seryl-[protein] + ADP + H(+). It carries out the reaction L-threonyl-[protein] + ATP = O-phospho-L-threonyl-[protein] + ADP + H(+). Protein with a unique structure having two opposing regulatory activities toward small GTP-binding proteins. The C-terminus is a GTPase-activating protein (GAP) domain which stimulates GTP hydrolysis by RAC1, RAC2 and CDC42. Accelerates the intrinsic rate of GTP hydrolysis of RAC1 or CDC42, leading to down-regulation of the active GTP-bound form. The central Dbl homology (DH) domain functions as guanine nucleotide exchange factor (GEF) that modulates the GTPases CDC42, RHOA and RAC1. Promotes the conversion of CDC42, RHOA and RAC1 from the GDP-bound to the GTP-bound form. The amino terminus contains an intrinsic kinase activity. Functions as an important negative regulator of neuronal RAC1 activity. Regulates macrophage functions such as CSF1-directed motility and phagocytosis through the modulation of RAC1 activity. Plays a major role as a RHOA GEF in keratinocytes being involved in focal adhesion formation and keratinocyte differentiation. The protein is Breakpoint cluster region protein of Rattus norvegicus (Rat).